The primary structure comprises 141 residues: Ribonuclease P protein component (141 aa).

2 disordered regions span residues R37–T56 and R114–K141. Over residues R114 to S124 the composition is skewed to basic and acidic residues.

Belongs to the RnpA family. As to quaternary structure, consists of a catalytic RNA component (M1 or rnpB) and a protein subunit.

The catalysed reaction is Endonucleolytic cleavage of RNA, removing 5'-extranucleotides from tRNA precursor.. In terms of biological role, RNaseP catalyzes the removal of the 5'-leader sequence from pre-tRNA to produce the mature 5'-terminus. It can also cleave other RNA substrates such as 4.5S RNA. The protein component plays an auxiliary but essential role in vivo by binding to the 5'-leader sequence and broadening the substrate specificity of the ribozyme. The protein is Ribonuclease P protein component of Brucella melitensis biotype 2 (strain ATCC 23457).